The primary structure comprises 745 residues: 5-methyltetrahydropteroyltriglutamate--homocysteine methyltransferase (745 aa).

5-methyltetrahydropteroyltri-L-glutamate is bound by residues 16–19 (REWK) and Lys-110. Residues 420-422 (IGS) and Glu-473 contribute to the L-homocysteine site. L-methionine-binding positions include 420-422 (IGS) and Glu-473. Trp-550 contacts 5-methyltetrahydropteroyltri-L-glutamate. An L-homocysteine-binding site is contributed by Asp-588. Residue Asp-588 participates in L-methionine binding. 5-methyltetrahydropteroyltri-L-glutamate is bound at residue Glu-594. Zn(2+) is bound by residues His-630, Cys-632, and Glu-654. Catalysis depends on His-683, which acts as the Proton donor. Cys-715 contacts Zn(2+).

The protein belongs to the vitamin-B12 independent methionine synthase family. Requires Zn(2+) as cofactor.

The enzyme catalyses 5-methyltetrahydropteroyltri-L-glutamate + L-homocysteine = tetrahydropteroyltri-L-glutamate + L-methionine. It participates in amino-acid biosynthesis; L-methionine biosynthesis via de novo pathway; L-methionine from L-homocysteine (MetE route): step 1/1. Catalyzes the transfer of a methyl group from 5-methyltetrahydrofolate to homocysteine resulting in methionine formation. The chain is 5-methyltetrahydropteroyltriglutamate--homocysteine methyltransferase from Streptococcus agalactiae serotype III (strain NEM316).